Here is a 167-residue protein sequence, read N- to C-terminus: MRILGIDPGTLVVGYGIIETANDELTLVGFSSLTPPACAPIPQRLAYIYKGLVEVIELYQPDEVAVESPFADKNIKSALAIGKAQAVALLAAANHSLPVTEYSPACIKSRVAGSGNASKEQIQEMVRLLLNLAEIPQPNDAADALAVAICHHSQRAFTNIISQGDLT.

Catalysis depends on residues aspartate 7, glutamate 67, and aspartate 140. Residues aspartate 7, glutamate 67, and aspartate 140 each coordinate Mg(2+).

This sequence belongs to the RuvC family. Homodimer which binds Holliday junction (HJ) DNA. The HJ becomes 2-fold symmetrical on binding to RuvC with unstacked arms; it has a different conformation from HJ DNA in complex with RuvA. In the full resolvosome a probable DNA-RuvA(4)-RuvB(12)-RuvC(2) complex forms which resolves the HJ. Mg(2+) serves as cofactor.

The protein resides in the cytoplasm. The catalysed reaction is Endonucleolytic cleavage at a junction such as a reciprocal single-stranded crossover between two homologous DNA duplexes (Holliday junction).. Functionally, the RuvA-RuvB-RuvC complex processes Holliday junction (HJ) DNA during genetic recombination and DNA repair. Endonuclease that resolves HJ intermediates. Cleaves cruciform DNA by making single-stranded nicks across the HJ at symmetrical positions within the homologous arms, yielding a 5'-phosphate and a 3'-hydroxyl group; requires a central core of homology in the junction. The consensus cleavage sequence is 5'-(A/T)TT(C/G)-3'. Cleavage occurs on the 3'-side of the TT dinucleotide at the point of strand exchange. HJ branch migration catalyzed by RuvA-RuvB allows RuvC to scan DNA until it finds its consensus sequence, where it cleaves and resolves the cruciform DNA. The chain is Crossover junction endodeoxyribonuclease RuvC from Dehalococcoides mccartyi (strain ATCC BAA-2100 / JCM 16839 / KCTC 5957 / BAV1).